An 845-amino-acid chain; its full sequence is Complement component C7 (845 aa).

Positions 1 to 22 (MQVTSLLILVCFIAAFQVFSRA) are cleaved as a signal peptide. In terms of domain architecture, TSP type-1 1 spans 27–80 (NCKWDSYGPWSECNGCTKTQTRRRSVAVYGQYGGYPCEGSAFETQSCKPERGCP). 6 disulfide bridges follow: Cys28–Cys63, Cys39–Cys73, Cys42–Cys79, Cys85–Cys96, Cys91–Cys109, and Cys103–Cys119. The region spanning 84 to 120 (GCGDRFRCFSGQCISKSLVCNGDPDCEEDGADEDKCE) is the LDL-receptor class A domain. Residues 122 to 456 (VANPSCNIDK…EYFDEFDPCH (335 aa)) enclose the MACPF domain. N-linked (GlcNAc...) asparagine glycosylation is present at Asn124. The cysteines at positions 127 and 164 are disulfide-linked. Asn201 carries N-linked (GlcNAc...) asparagine glycosylation. 21 disulfides stabilise this stretch: Cys336–Cys353, Cys433–Cys560, Cys455–Cys505, Cys457–Cys473, Cys460–Cys475, Cys477–Cys486, Cys512–Cys545, Cys523–Cys535, Cys571–Cys613, Cys599–Cys626, Cys631–Cys673, Cys659–Cys688, Cys703–Cys714, Cys716–Cys751, Cys722–Cys744, Cys729–Cys764, Cys774–Cys783, Cys777–Cys790, Cys792–Cys826, Cys798–Cys819, and Cys806–Cys839. The region spanning 457-487 (CRPCQNGGLAIVVETQCQCLCKPYTFGSACE) is the EGF-like domain. A TSP type-1 2 domain is found at 500 to 549 (DGGWNCWSSWSPCVQGKRTRSRECNNPPPRDDGKSCLGETTESKQCEDQD). 2 CCP regions span residues 545 to 615 (CEDQ…RCGE) and 616 to 693 (DLQW…QKAT). 2 consecutive Sushi domains span residues 569 to 628 (EFCL…HCQK) and 629 to 690 (LACV…KCVQ). 2 factor I module (FIM) regions span residues 695–771 (TPPP…SPAE) and 772–844 (KVCG…EEAA). A glycan (N-linked (GlcNAc...) asparagine) is linked at Asn755.

The protein belongs to the complement C6/C7/C8/C9 family. In terms of assembly, monomer or dimer; as a C5b-7 complex it can also form multimeric rosettes. Component of the membrane attack complex (MAC), composed of complement C5b, C6, C7, C8A, C8B, C8G and multiple copies of the pore-forming subunit C9. C-, N- and O-glycosylated. O-glycosylated with core 1 or possibly core 8 glycans.

It localises to the secreted. It is found in the target cell membrane. With respect to regulation, membrane attack complex (MAC) assembly is inhibited by CD59, thereby protecting self-cells from damage during complement activation. MAC assembly is also inhibited by clusterin (CLU) chaperones that inhibit polymerization of C9. Its function is as follows. Component of the membrane attack complex (MAC), a multiprotein complex activated by the complement cascade, which inserts into a target cell membrane and forms a pore, leading to target cell membrane rupture and cell lysis. The MAC is initiated by proteolytic cleavage of C5 into complement C5b in response to the classical, alternative, lectin and GZMK complement pathways. The complement pathways consist in a cascade of proteins that leads to phagocytosis and breakdown of pathogens and signaling that strengthens the adaptive immune system. C7 serves as a membrane anchor. During MAC assembly, associates with C5b and C6 to form the C5b-7 complex, a key lipophilic precursor of the MAC complex, which associates with the outer leaflet and reduces the energy for membrane bending. This Mus musculus (Mouse) protein is Complement component C7.